The primary structure comprises 365 residues: UDP-N-acetylglucosamine--N-acetylmuramyl-(pentapeptide) pyrophosphoryl-undecaprenol N-acetylglucosamine transferase (365 aa).

Residues 10–12 (TGG), Asn-128, Arg-170, Ser-199, Ile-250, and Gln-295 each bind UDP-N-acetyl-alpha-D-glucosamine.

Belongs to the glycosyltransferase 28 family. MurG subfamily.

Its subcellular location is the cell inner membrane. The catalysed reaction is di-trans,octa-cis-undecaprenyl diphospho-N-acetyl-alpha-D-muramoyl-L-alanyl-D-glutamyl-meso-2,6-diaminopimeloyl-D-alanyl-D-alanine + UDP-N-acetyl-alpha-D-glucosamine = di-trans,octa-cis-undecaprenyl diphospho-[N-acetyl-alpha-D-glucosaminyl-(1-&gt;4)]-N-acetyl-alpha-D-muramoyl-L-alanyl-D-glutamyl-meso-2,6-diaminopimeloyl-D-alanyl-D-alanine + UDP + H(+). The protein operates within cell wall biogenesis; peptidoglycan biosynthesis. Its function is as follows. Cell wall formation. Catalyzes the transfer of a GlcNAc subunit on undecaprenyl-pyrophosphoryl-MurNAc-pentapeptide (lipid intermediate I) to form undecaprenyl-pyrophosphoryl-MurNAc-(pentapeptide)GlcNAc (lipid intermediate II). The polypeptide is UDP-N-acetylglucosamine--N-acetylmuramyl-(pentapeptide) pyrophosphoryl-undecaprenol N-acetylglucosamine transferase (Prosthecochloris aestuarii (strain DSM 271 / SK 413)).